Reading from the N-terminus, the 537-residue chain is Putative cysteine ligase BshC (537 aa).

The stretch at 415–439 (EKASNNFINEVEEMKIQQQELYNNL) forms a coiled coil.

This sequence belongs to the BshC family.

Its function is as follows. Involved in bacillithiol (BSH) biosynthesis. May catalyze the last step of the pathway, the addition of cysteine to glucosamine malate (GlcN-Mal) to generate BSH. The protein is Putative cysteine ligase BshC of Staphylococcus epidermidis (strain ATCC 12228 / FDA PCI 1200).